A 215-amino-acid chain; its full sequence is Histidine biosynthesis bifunctional protein HisIE (215 aa).

The phosphoribosyl-AMP cyclohydrolase stretch occupies residues 1-118; that stretch reads MTKSISIEHL…YKNDVALLQI (118 aa). A phosphoribosyl-ATP pyrophosphohydrolase region spans residues 119 to 215; that stretch reads IPQVSAKIKE…HVEKEGQQRE (97 aa).

In the N-terminal section; belongs to the PRA-CH family. The protein in the C-terminal section; belongs to the PRA-PH family.

It localises to the cytoplasm. The enzyme catalyses 1-(5-phospho-beta-D-ribosyl)-ATP + H2O = 1-(5-phospho-beta-D-ribosyl)-5'-AMP + diphosphate + H(+). The catalysed reaction is 1-(5-phospho-beta-D-ribosyl)-5'-AMP + H2O = 1-(5-phospho-beta-D-ribosyl)-5-[(5-phospho-beta-D-ribosylamino)methylideneamino]imidazole-4-carboxamide. It participates in amino-acid biosynthesis; L-histidine biosynthesis; L-histidine from 5-phospho-alpha-D-ribose 1-diphosphate: step 2/9. The protein operates within amino-acid biosynthesis; L-histidine biosynthesis; L-histidine from 5-phospho-alpha-D-ribose 1-diphosphate: step 3/9. This is Histidine biosynthesis bifunctional protein HisIE from Oceanobacillus iheyensis (strain DSM 14371 / CIP 107618 / JCM 11309 / KCTC 3954 / HTE831).